Here is a 502-residue protein sequence, read N- to C-terminus: Aspartyl/glutamyl-tRNA(Asn/Gln) amidotransferase subunit B (502 aa).

It belongs to the GatB/GatE family. GatB subfamily. Heterotrimer of A, B and C subunits.

The enzyme catalyses L-glutamyl-tRNA(Gln) + L-glutamine + ATP + H2O = L-glutaminyl-tRNA(Gln) + L-glutamate + ADP + phosphate + H(+). The catalysed reaction is L-aspartyl-tRNA(Asn) + L-glutamine + ATP + H2O = L-asparaginyl-tRNA(Asn) + L-glutamate + ADP + phosphate + 2 H(+). In terms of biological role, allows the formation of correctly charged Asn-tRNA(Asn) or Gln-tRNA(Gln) through the transamidation of misacylated Asp-tRNA(Asn) or Glu-tRNA(Gln) in organisms which lack either or both of asparaginyl-tRNA or glutaminyl-tRNA synthetases. The reaction takes place in the presence of glutamine and ATP through an activated phospho-Asp-tRNA(Asn) or phospho-Glu-tRNA(Gln). The polypeptide is Aspartyl/glutamyl-tRNA(Asn/Gln) amidotransferase subunit B (Brucella suis (strain ATCC 23445 / NCTC 10510)).